A 270-amino-acid chain; its full sequence is Putative ABC transporter ATP-binding protein MG304 (270 aa).

The ABC transporter domain occupies 1–232 (MLQVKNLSFK…LDLFHNHHFN (232 aa)). An ATP-binding site is contributed by 36–43 (GHNGSGKS).

Belongs to the ABC transporter superfamily.

The sequence is that of Putative ABC transporter ATP-binding protein MG304 from Mycoplasma genitalium (strain ATCC 33530 / DSM 19775 / NCTC 10195 / G37) (Mycoplasmoides genitalium).